A 502-amino-acid polypeptide reads, in one-letter code: uncharacterized protein (502 aa).

The chain crosses the membrane as a helical span at residues 1–21 (MKIFLVFLSVFFFNGCFGLVY). 2 consecutive PLD phosphodiesterase domains span residues 162–189 (IKKR…GDNY) and 396–423 (TKHS…DPRS).

This sequence belongs to the phospholipase D family. Cardiolipin synthase subfamily.

The protein resides in the cell membrane. This is an uncharacterized protein from Helicobacter pylori (strain ATCC 700392 / 26695) (Campylobacter pylori).